Consider the following 224-residue polypeptide: Thiamine-triphosphatase (224 aa).

N-acetylalanine is present on A2. Residues 5–201 (LIEVERKFAP…AKLMVYLQRF (197 aa)) form the CYTH domain. Residues E7 and E9 each contribute to the Mg(2+) site. Residues K11, R55, R57, K65, and R125 each contribute to the substrate site. Residues D145, E157, and E159 each coordinate Mg(2+). E157 is a binding site for substrate. K193 contacts substrate.

It belongs to the ThTPase family. As to quaternary structure, monomer. Requires Mg(2+) as cofactor.

The protein localises to the cytoplasm. The catalysed reaction is thiamine triphosphate + H2O = thiamine diphosphate + phosphate + H(+). Its function is as follows. Hydrolase highly specific for thiamine triphosphate (ThTP). This chain is Thiamine-triphosphatase (Thtpa), found in Mus musculus (Mouse).